Here is a 688-residue protein sequence, read N- to C-terminus: Glycine--tRNA ligase beta subunit (688 aa).

This sequence belongs to the class-II aminoacyl-tRNA synthetase family. In terms of assembly, tetramer of two alpha and two beta subunits.

Its subcellular location is the cytoplasm. It catalyses the reaction tRNA(Gly) + glycine + ATP = glycyl-tRNA(Gly) + AMP + diphosphate. This chain is Glycine--tRNA ligase beta subunit, found in Chromohalobacter salexigens (strain ATCC BAA-138 / DSM 3043 / CIP 106854 / NCIMB 13768 / 1H11).